The primary structure comprises 302 residues: Formylmethanofuran--tetrahydromethanopterin formyltransferase (302 aa).

It belongs to the FTR family. In terms of assembly, homotetramer.

The protein resides in the cytoplasm. The enzyme catalyses N-formylmethanofuran + 5,6,7,8-tetrahydromethanopterin + H(+) = N(5)-formyl-5,6,7,8-tetrahydromethanopterin + methanofuran. It participates in one-carbon metabolism; formaldehyde degradation; formate from formaldehyde (H(4)MPT route): step 4/5. Its function is as follows. Catalyzes the transfer of a formyl group from 5-formyl tetrahydromethanopterin (5-formyl-H(4)MPT) to methanofuran (MFR) to produce formylmethanofuran (formyl-MFR) and tetrahydromethanopterin (H(4)MPT). This is Formylmethanofuran--tetrahydromethanopterin formyltransferase from Methylobacillus flagellatus (strain ATCC 51484 / DSM 6875 / VKM B-1610 / KT).